We begin with the raw amino-acid sequence, 249 residues long: 23S rRNA (guanosine-2'-O-)-methyltransferase RlmB (249 aa).

S-adenosyl-L-methionine is bound by residues Gly-197, Ile-217, and Leu-226.

Belongs to the class IV-like SAM-binding methyltransferase superfamily. RNA methyltransferase TrmH family. RlmB subfamily.

It is found in the cytoplasm. The catalysed reaction is guanosine(2251) in 23S rRNA + S-adenosyl-L-methionine = 2'-O-methylguanosine(2251) in 23S rRNA + S-adenosyl-L-homocysteine + H(+). Specifically methylates the ribose of guanosine 2251 in 23S rRNA. The polypeptide is 23S rRNA (guanosine-2'-O-)-methyltransferase RlmB (Ralstonia nicotianae (strain ATCC BAA-1114 / GMI1000) (Ralstonia solanacearum)).